A 140-amino-acid chain; its full sequence is Putative pre-16S rRNA nuclease (140 aa).

The protein belongs to the YqgF nuclease family.

It is found in the cytoplasm. Functionally, could be a nuclease involved in processing of the 5'-end of pre-16S rRNA. In Aeromonas salmonicida (strain A449), this protein is Putative pre-16S rRNA nuclease.